A 381-amino-acid chain; its full sequence is Cytochrome b (381 aa).

The next 4 membrane-spanning stretches (helical) occupy residues 36-56, 80-101, 116-136, and 181-201; these read FGSLLAMCLIIQIITGLFLTM, WLIRTLHANGASFFFICIYIHI, WMVGVIILFLLMATAFMGYVL, and FYTFHFILPFIILMMTMIHLL. Heme b contacts are provided by His86 and His100. The heme b site is built by His185 and His199. His204 is an a ubiquinone binding site. 4 helical membrane passes run 229-249, 291-311, 323-343, and 350-370; these read FKDMIGFIIISFLLIFLTLTN, LGGVIALIMSILILIILPLTF, MNQILFWIMVVTIILLTWIGA, and YVFVGQVLTIMYFSYYIINPM.

The protein belongs to the cytochrome b family. In terms of assembly, the main subunits of complex b-c1 are: cytochrome b, cytochrome c1 and the Rieske protein. It depends on heme b as a cofactor.

The protein resides in the mitochondrion inner membrane. Component of the ubiquinol-cytochrome c reductase complex (complex III or cytochrome b-c1 complex) that is part of the mitochondrial respiratory chain. The b-c1 complex mediates electron transfer from ubiquinol to cytochrome c. Contributes to the generation of a proton gradient across the mitochondrial membrane that is then used for ATP synthesis. This Ostrinia nubilalis (European corn borer) protein is Cytochrome b (MT-CYB).